The sequence spans 271 residues: Neurexophilin-1 (271 aa).

The signal sequence occupies residues 1–21; the sequence is MQAACWYVLLLLQPTIYLVTC. The segment at 22-97 is II; that stretch reads ANLTNGGKSE…WDWLRNSTDL (76 aa). N-linked (GlcNAc...) asparagine glycosylation is found at Asn23, Asn68, Asn93, Asn146, Asn156, and Asn162. Residues 98–176 form an III region; the sequence is QEPRPRAKRR…LVPPTKIVEF (79 aa). The IV (linker domain) stretch occupies residues 177–185; that stretch reads DLAQQTVID. A v (Cys-rich) region spans residues 186–271; sequence AKDSKSFNCR…HSDTPYFPSG (86 aa).

It belongs to the neurexophilin family.

The protein localises to the secreted. Its function is as follows. May be signaling molecules that resemble neuropeptides and that act by binding to alpha-neurexins and possibly other receptors. This chain is Neurexophilin-1 (NXPH1), found in Pongo abelii (Sumatran orangutan).